The chain runs to 369 residues: DNA replication and repair protein RecF (369 aa).

30–37 (GDNAQGKT) is a binding site for ATP.

This sequence belongs to the RecF family.

It localises to the cytoplasm. In terms of biological role, the RecF protein is involved in DNA metabolism; it is required for DNA replication and normal SOS inducibility. RecF binds preferentially to single-stranded, linear DNA. It also seems to bind ATP. The polypeptide is DNA replication and repair protein RecF (Streptococcus equi subsp. zooepidemicus (strain MGCS10565)).